The chain runs to 779 residues: Pleckstrin homology domain-containing family A member 4 (779 aa).

Positions 54–153 (PVHIRGWLHK…WLRALGKASR (100 aa)) constitute a PH domain. 3 disordered regions span residues 152–355 (SRAE…LPGP), 495–669 (AGLG…SGGH), and 694–766 (SPER…QEEG). The residue at position 164 (Ser164) is a Phosphoserine. Basic and acidic residues predominate over residues 183-193 (VNRREEGRTSE). Low complexity-rich tracts occupy residues 246 to 259 (PRPR…PPLS) and 324 to 334 (QSTQVSSGSST). Basic and acidic residues predominate over residues 517 to 527 (QREESSERESL). The segment covering 528–540 (SESLELSSPQSPE) has biased composition (low complexity). Ser562 is modified (phosphoserine). The span at 567–580 (RASSPECRQQSSPL) shows a compositional bias: polar residues. Low complexity-rich tracts occupy residues 608–627 (GLSL…RTLS) and 649–659 (SSGSWSSPRHS). A compositionally biased stretch (polar residues) spans 720 to 740 (VTSSPTSHKANSATTGFSCQG).

The protein localises to the cytoplasm. The protein resides in the membrane. Functionally, binds specifically to phosphatidylinositol 3-phosphate (PtdIns3P), but not to other phosphoinositides. The chain is Pleckstrin homology domain-containing family A member 4 (Plekha4) from Rattus norvegicus (Rat).